Here is a 460-residue protein sequence, read N- to C-terminus: uncharacterized protein (460 aa).

Residues 9-67 form the TRAM domain; it reads NFKKNDIFEAEVLDLTHEGQGVVKIDSFPFFVDNALPGERIKMHVLKVGKSFGFGRVDE. S-adenosyl-L-methionine is bound by residues Q292, Y321, E342, and D390. Catalysis depends on C417, which acts as the Nucleophile.

This sequence belongs to the class I-like SAM-binding methyltransferase superfamily. RNA M5U methyltransferase family.

This is an uncharacterized protein from Lactococcus lactis subsp. lactis (strain IL1403) (Streptococcus lactis).